The sequence spans 529 residues: MYFLILILVLLLIMVAAATAYVNLIDVHHEDVRPPLQMFDTGNVPLIEPPGEIVTEGNAHECHKALTPCDTHADCNACREGLANCQLFDEETMVQMRDADGNEQSATIRAGESYCFALDRERARSCNPGTGVWLLAQTETGFALLCSCLRPGLVTQLNMYEDCNVPVGCAPHGHVAGVGADARCVFDEGYVIDYDAATETPFCRPRTVRDVLFDEAFFPRAPCADGQVRLDHPGLNDYYRRYFRIEDICVVDPCSVDPISGRRTSGRLFYHAADGVEVSGCNCPAADGLLPVFNRHVADSGMVPRGDRTVANACLHPFNVHMLALRHVDYKFFWARPDHDEVADADVVFQADERQLSHERYRAMLYPLLRFHPEETSLVWGDSRVLKISVSYDTVLKNALLPPSLFQLFKRKERATSEPACFFPGEGRCIVHNSETCIRRHANGQVWTAETFTGSWCVLSRDGAAIKVWSRAERYPRGAAPAALRLRGFFFNNDRERNTVRVVNTGDMASGAQTDALTQVLDTFSNYSV.

Residues methionine 1–alanine 20 form the signal peptide.

This is an uncharacterized protein from Orgyia pseudotsugata multicapsid polyhedrosis virus (OpMNPV).